Reading from the N-terminus, the 341-residue chain is S-adenosylmethionine:tRNA ribosyltransferase-isomerase (341 aa).

It belongs to the QueA family. In terms of assembly, monomer.

The protein resides in the cytoplasm. It carries out the reaction 7-aminomethyl-7-carbaguanosine(34) in tRNA + S-adenosyl-L-methionine = epoxyqueuosine(34) in tRNA + adenine + L-methionine + 2 H(+). Its pathway is tRNA modification; tRNA-queuosine biosynthesis. Transfers and isomerizes the ribose moiety from AdoMet to the 7-aminomethyl group of 7-deazaguanine (preQ1-tRNA) to give epoxyqueuosine (oQ-tRNA). The chain is S-adenosylmethionine:tRNA ribosyltransferase-isomerase from Clostridium botulinum (strain Loch Maree / Type A3).